A 504-amino-acid polypeptide reads, in one-letter code: Maturase K (504 aa).

Belongs to the intron maturase 2 family. MatK subfamily.

The protein localises to the plastid. Its subcellular location is the chloroplast. In terms of biological role, usually encoded in the trnK tRNA gene intron. Probably assists in splicing its own and other chloroplast group II introns. The polypeptide is Maturase K (Arabidopsis thaliana (Mouse-ear cress)).